The following is a 174-amino-acid chain: uncharacterized protein (174 aa).

This is an uncharacterized protein from Caenorhabditis elegans.